The following is a 417-amino-acid chain: Serine hydroxymethyltransferase (417 aa).

Residues L121 and 125 to 127 (GHL) contribute to the (6S)-5,6,7,8-tetrahydrofolate site. K229 is subject to N6-(pyridoxal phosphate)lysine. 354-356 (SPF) contacts (6S)-5,6,7,8-tetrahydrofolate.

This sequence belongs to the SHMT family. As to quaternary structure, homodimer. Requires pyridoxal 5'-phosphate as cofactor.

It localises to the cytoplasm. It catalyses the reaction (6R)-5,10-methylene-5,6,7,8-tetrahydrofolate + glycine + H2O = (6S)-5,6,7,8-tetrahydrofolate + L-serine. Its pathway is one-carbon metabolism; tetrahydrofolate interconversion. The protein operates within amino-acid biosynthesis; glycine biosynthesis; glycine from L-serine: step 1/1. In terms of biological role, catalyzes the reversible interconversion of serine and glycine with tetrahydrofolate (THF) serving as the one-carbon carrier. This reaction serves as the major source of one-carbon groups required for the biosynthesis of purines, thymidylate, methionine, and other important biomolecules. Also exhibits THF-independent aldolase activity toward beta-hydroxyamino acids, producing glycine and aldehydes, via a retro-aldol mechanism. The sequence is that of Serine hydroxymethyltransferase from Dichelobacter nodosus (strain VCS1703A).